Consider the following 330-residue polypeptide: GTPase Obg (330 aa).

The region spanning 1-159 (MHFIDEVKIY…MWIHLSLKLL (159 aa)) is the Obg domain. In terms of domain architecture, OBG-type G spans 160-327 (SDVGLVGLPN…IVKLALETIK (168 aa)). GTP is bound by residues 166–173 (GLPNAGKS), 191–195 (FTTLV), 212–215 (DIPG), 279–282 (NKCD), and 308–310 (STC). Residues serine 173 and threonine 193 each coordinate Mg(2+).

Belongs to the TRAFAC class OBG-HflX-like GTPase superfamily. OBG GTPase family. As to quaternary structure, monomer. Mg(2+) is required as a cofactor.

The protein localises to the cytoplasm. An essential GTPase which binds GTP, GDP and possibly (p)ppGpp with moderate affinity, with high nucleotide exchange rates and a fairly low GTP hydrolysis rate. Plays a role in control of the cell cycle, stress response, ribosome biogenesis and in those bacteria that undergo differentiation, in morphogenesis control. The sequence is that of GTPase Obg from Rickettsia conorii (strain ATCC VR-613 / Malish 7).